The sequence spans 140 residues: Mialostatin (140 aa).

The N-terminal stretch at 1–18 is a signal peptide; the sequence is MAFFKSAVFLVCVVLAAA. Disulfide bonds link C90-C103 and C114-C134.

This sequence belongs to the cystatin family. As to expression, expressed in midgut (at protein level).

It is found in the secreted. Functionally, inhibitor of cysteine proteinases. Inhibits several endogenous midgut digestive cysteine proteases, such as cathepsin L1, L3, B and C, but not aspartic protease cathepsin D1 and cysteine protease legumain. Inhibits proteolysis of blood proteins catalyzed by tick gut cysteine cathepsins. Inhibits host cathepsin B (CSTB), C (CTSC), H (CTSH), K (CTSK), L (CTSL) and S (CTSS). This Ixodes ricinus (Common tick) protein is Mialostatin.